The following is a 304-amino-acid chain: Aspartate carbamoyltransferase catalytic subunit (304 aa).

Residues R53 and T54 each contribute to the carbamoyl phosphate site. K82 is an L-aspartate binding site. Carbamoyl phosphate-binding residues include R103, H131, and Q134. L-aspartate is bound by residues R163 and R224. Positions 263 and 264 each coordinate carbamoyl phosphate.

Belongs to the aspartate/ornithine carbamoyltransferase superfamily. ATCase family. Heterooligomer of catalytic and regulatory chains.

It carries out the reaction carbamoyl phosphate + L-aspartate = N-carbamoyl-L-aspartate + phosphate + H(+). It functions in the pathway pyrimidine metabolism; UMP biosynthesis via de novo pathway; (S)-dihydroorotate from bicarbonate: step 2/3. Catalyzes the condensation of carbamoyl phosphate and aspartate to form carbamoyl aspartate and inorganic phosphate, the committed step in the de novo pyrimidine nucleotide biosynthesis pathway. This Haloquadratum walsbyi (strain DSM 16790 / HBSQ001) protein is Aspartate carbamoyltransferase catalytic subunit.